Reading from the N-terminus, the 449-residue chain is Tubulin beta-7 chain (449 aa).

Positions 11, 69, 138, 142, 143, 144, 204, and 226 each coordinate GTP. Residue E69 participates in Mg(2+) binding. The disordered stretch occupies residues 422–449 (YQQYQDATADEEGEYEEEEAEYEQEETY). Residues 429-449 (TADEEGEYEEEEAEYEQEETY) show a composition bias toward acidic residues.

It belongs to the tubulin family. Dimer of alpha and beta chains. A typical microtubule is a hollow water-filled tube with an outer diameter of 25 nm and an inner diameter of 15 nM. Alpha-beta heterodimers associate head-to-tail to form protofilaments running lengthwise along the microtubule wall with the beta-tubulin subunit facing the microtubule plus end conferring a structural polarity. Microtubules usually have 13 protofilaments but different protofilament numbers can be found in some organisms and specialized cells. The cofactor is Mg(2+).

It is found in the cytoplasm. The protein localises to the cytoskeleton. Tubulin is the major constituent of microtubules, a cylinder consisting of laterally associated linear protofilaments composed of alpha- and beta-tubulin heterodimers. Microtubules grow by the addition of GTP-tubulin dimers to the microtubule end, where a stabilizing cap forms. Below the cap, tubulin dimers are in GDP-bound state, owing to GTPase activity of alpha-tubulin. This Arabidopsis thaliana (Mouse-ear cress) protein is Tubulin beta-7 chain (TUBB7).